The primary structure comprises 124 residues: U12-barytoxin-Tl1a (124 aa).

An N-terminal signal peptide occupies residues 1–20 (MKTMIAWLVLLTFAAALCFA). Residues 21 to 78 (DEGLKQEHMNERKKSRFREDIPDEISEDLLLQEMEAMEAELLEKEMRMEENRNSREKR) constitute a propeptide that is removed on maturation. Disulfide bonds link Cys79–Cys99, Cys86–Cys104, and Cys98–Cys118.

Belongs to the neurotoxin 14 (magi-1) family. 04 (ICK-6) subfamily. Expressed by the venom gland.

Its subcellular location is the secreted. Functionally, ion channel inhibitor. The sequence is that of U12-barytoxin-Tl1a from Trittame loki (Brush-footed trapdoor spider).